The sequence spans 72 residues: C-hordein (72 aa).

The span at 1–36 shows a compositional bias: pro residues; that stretch reads FPQPQEPFPQQPQQPFPLQPQQPFPQQPQQPFPQPQ. The interval 1-61 is disordered; the sequence is FPQPQEPFPQ…QQPFPLQPHQ (61 aa). The span at 37–50 shows a compositional bias: low complexity; that stretch reads QPFRQQAELIIPQQ.

Developing endosperm.

Sulfur-poor seed storage protein. In Hordeum vulgare (Barley), this protein is C-hordein.